The chain runs to 357 residues: Non-structural protein NS2 (357 aa).

2 disordered regions span residues 163-199 (NERE…AREM) and 228-267 (LDEK…PKTH). Composition is skewed to acidic residues over residues 230–241 (EKDEEDGDERED) and 250–260 (DDDEQGEDASD).

This sequence belongs to the orbivirus non-structural protein NS2 family.

Functionally, single-stranded RNA-binding protein. The polypeptide is Non-structural protein NS2 (Segment-8) (Antilocapra americana (Pronghorn)).